Reading from the N-terminus, the 532-residue chain is Fatty-acid amide hydrolase 2-A (532 aa).

Residues 9 to 29 (FLGRLLRAVVWILFAAFKLFA) traverse the membrane as a helical segment. Active-site charge relay system residues include lysine 129 and serine 204. The active-site Acyl-ester intermediate is serine 228.

Belongs to the amidase family.

The protein resides in the membrane. It catalyses the reaction N-(5Z,8Z,11Z,14Z-eicosatetraenoyl)-ethanolamine + H2O = ethanolamine + (5Z,8Z,11Z,14Z)-eicosatetraenoate. It carries out the reaction (9Z)-octadecenamide + H2O = (9Z)-octadecenoate + NH4(+). The sequence is that of Fatty-acid amide hydrolase 2-A (faah2a) from Danio rerio (Zebrafish).